The following is a 256-amino-acid chain: Triosephosphate isomerase (256 aa).

Substrate is bound at residue 10 to 12 (NWK). Residue H96 is the Electrophile of the active site. The active-site Proton acceptor is the E168. Substrate is bound by residues G174 and S213.

This sequence belongs to the triosephosphate isomerase family. As to quaternary structure, homodimer.

Its subcellular location is the cytoplasm. The catalysed reaction is D-glyceraldehyde 3-phosphate = dihydroxyacetone phosphate. Its pathway is carbohydrate biosynthesis; gluconeogenesis. It participates in carbohydrate degradation; glycolysis; D-glyceraldehyde 3-phosphate from glycerone phosphate: step 1/1. Its function is as follows. Involved in the gluconeogenesis. Catalyzes stereospecifically the conversion of dihydroxyacetone phosphate (DHAP) to D-glyceraldehyde-3-phosphate (G3P). This chain is Triosephosphate isomerase, found in Wigglesworthia glossinidia brevipalpis.